Consider the following 309-residue polypeptide: Zinc finger protein-like 1 homolog (309 aa).

A B box-type; degenerate zinc finger spans residues 1–43; it reads MGLCKCPKRKVTNLFCYEHRVNVCEFCLVDNHPNCVVQSYLTW. Residues 53–101 form an RING-type; atypical zinc finger; sequence CSLCKTTLAEGDTIRLNCLHLLHWKCFDEWAANFPATTAPAGYRCPCCS. The interval 200–221 is disordered; sequence GAESSSDTRPLLQLRDADNEEN. A helical membrane pass occupies residues 254–274; sequence KIALFVIFLAVLALITIIMVM.

It belongs to the ZFPL1 family.

It is found in the membrane. This is Zinc finger protein-like 1 homolog from Caenorhabditis elegans.